We begin with the raw amino-acid sequence, 242 residues long: MKRVKTGIPGMDEILHGGIPERNVVLLSGGPGTGKSIFCQQFLYKGVVDYNEPSILVALEEHPVQIRENMRQFGWDIRKLEEEGKFAIIDAFTYGIGSAAKREKYVVNDPNDERELIDVLKTAINDIGAKRIGIDSVTTLYINKPMLARRTVFLLKRVISGLGCTAIFTSQISVGERGFGGPGVEHAVDGIIRLDLDEIDGELKRSLIVWKMRGTSHSLKRHPFDITNEGIIVYPDKVLKLR.

A KaiC domain is found at 2–242; the sequence is KRVKTGIPGM…VYPDKVLKLR (241 aa). An ATP-binding site is contributed by 29-36; it reads GGPGTGKS.

It belongs to the UPF0273 family.

This chain is UPF0273 protein MJ1359, found in Methanocaldococcus jannaschii (strain ATCC 43067 / DSM 2661 / JAL-1 / JCM 10045 / NBRC 100440) (Methanococcus jannaschii).